Reading from the N-terminus, the 588-residue chain is Disabled homolog 1 (588 aa).

A disordered region spans residues 1–26 (MSTETELQVAVKTSAKKDSRKKGQDR). The segment covering 15-26 (AKKDSRKKGQDR) has biased composition (basic and acidic residues). Residues 36 to 189 (KGEGVRYKAK…CEQAVYQTIL (154 aa)) form the PID domain. A phosphotyrosine mark is found at Tyr198, Tyr220, and Tyr232. 3 disordered regions span residues 417 to 443 (LTPL…RQKM), 451 to 470 (FQMA…PSLT), and 502 to 588 (LTPV…QAGS). Polar residues predominate over residues 424-436 (PGTSDSTRSSPQT). Composition is skewed to low complexity over residues 503 to 512 (TPVTSTTPST) and 520 to 534 (PRQS…SHAS). Ser524 bears the Phosphoserine; by CDK5 mark. The span at 537 to 546 (TTDDIFEEGF) shows a compositional bias: acidic residues.

In terms of assembly, associates with the SH2 domains of SRC, FYN and ABL. Interacts (phosphorylated on tyrosine residues) with CRK and CRKL (via respective SH2 domain). Interacts with SIAH1, LRP8 and VLDLR. Interacts with LRP1. Interacts with APLP1 (via NPXY motif). Interacts with DAB2IP. Interacts with ZSWIM8. In terms of processing, phosphorylated by FYN on Tyr-198 and Tyr-220 upon reelin induction in embryonic neurons. Also phosphorylated on Ser-524 independently of reelin signaling. Post-translationally, ubiquitinated by various cullin-5-RING E3 ubiquitin-protein ligase complexes (ECS complexes) following ligand-binding and phosphorylation, leading to its degradation. Ubiquitinated by the ECS(SOCS7) complex in the cortical plate of the developing cerebral cortex following ligand-binding and phosphorylation by FYN, leading to its degradation by the proteasome. Recognized by ZSWIM8 through a disorder targets misorder mechanism that eliminates misfolded DAB1 via ubiquitination and proteasomal degradation. Mainly expressed in brain.

Its subcellular location is the cytoplasm. Signaling adapter of the reelin-mediated signaling pathway, which regulates the migration and differentiation of postmitotic neurons during brain development. Mediates intracellular transduction of Reelin signaling following reelin (RELN)-binding to its receptor: acts by docking proteins through its phosphotyrosine residues and PID domain. The chain is Disabled homolog 1 (DAB1) from Homo sapiens (Human).